A 152-amino-acid polypeptide reads, in one-letter code: S-ribosylhomocysteine lyase (152 aa).

Fe cation-binding residues include H53, H57, and C120.

It belongs to the LuxS family. In terms of assembly, homodimer. Fe cation is required as a cofactor.

It catalyses the reaction S-(5-deoxy-D-ribos-5-yl)-L-homocysteine = (S)-4,5-dihydroxypentane-2,3-dione + L-homocysteine. Functionally, involved in the synthesis of autoinducer 2 (AI-2) which is secreted by bacteria and is used to communicate both the cell density and the metabolic potential of the environment. The regulation of gene expression in response to changes in cell density is called quorum sensing. Catalyzes the transformation of S-ribosylhomocysteine (RHC) to homocysteine (HC) and 4,5-dihydroxy-2,3-pentadione (DPD). The sequence is that of S-ribosylhomocysteine lyase from Enterococcus faecalis (strain ATCC 700802 / V583).